The sequence spans 362 residues: MSGAGEAAIRARFRLDWPGFALDVDLDLPGQGVTALFGHSGSGKTTLLRCIAGLERAAEGELRVRGEVWQDATRFVPTHRRPLGYVFQEASLFPHLSARGNLEYGMKRSREPLARAALDDVVGLLGIGRLLDRRPEQLSGGERQRVAIARALAVKPRLLLMDEPLAALDFARKQEVLPYLERLHDELDIPVLYVSHAPDEVARLADHLVVMQDGRAHASGPLGDTLARLDLPIRLGEDVGVVLDAVVAARDPAWHLVEMAFAGGRLWARDNGQPLGHRGRVRILARDVSLSRAPVSGTSILNTLPAVVVDSVDDGHPALVLVKLRVGDSPLLARLTRRSAHALELAPGRQVYAQIKAVALVG.

An ABC transporter domain is found at 4-238; that stretch reads AGEAAIRARF…LDLPIRLGED (235 aa). An ATP-binding site is contributed by 38–45; it reads GHSGSGKT. The Mop domain maps to 297 to 362; it reads GTSILNTLPA…AQIKAVALVG (66 aa).

Belongs to the ABC transporter superfamily. Molybdate importer (TC 3.A.1.8) family. As to quaternary structure, the complex is composed of two ATP-binding proteins (ModC), two transmembrane proteins (ModB) and a solute-binding protein (ModA).

Its subcellular location is the cell inner membrane. The enzyme catalyses molybdate(out) + ATP + H2O = molybdate(in) + ADP + phosphate + H(+). Part of the ABC transporter complex ModABC involved in molybdenum import. Responsible for energy coupling to the transport system. This is Molybdenum import ATP-binding protein ModC from Thiobacillus denitrificans (strain ATCC 25259 / T1).